The sequence spans 448 residues: Probable glycine dehydrogenase (decarboxylating) subunit 1 (448 aa).

This sequence belongs to the GcvP family. N-terminal subunit subfamily. The glycine cleavage system is composed of four proteins: P, T, L and H. In this organism, the P 'protein' is a heterodimer of two subunits.

It carries out the reaction N(6)-[(R)-lipoyl]-L-lysyl-[glycine-cleavage complex H protein] + glycine + H(+) = N(6)-[(R)-S(8)-aminomethyldihydrolipoyl]-L-lysyl-[glycine-cleavage complex H protein] + CO2. In terms of biological role, the glycine cleavage system catalyzes the degradation of glycine. The P protein binds the alpha-amino group of glycine through its pyridoxal phosphate cofactor; CO(2) is released and the remaining methylamine moiety is then transferred to the lipoamide cofactor of the H protein. This chain is Probable glycine dehydrogenase (decarboxylating) subunit 1, found in Staphylococcus carnosus (strain TM300).